A 684-amino-acid polypeptide reads, in one-letter code: Protein real-time (684 aa).

One can recognise a PRELI/MSF1 domain in the interval 2-178 (VQKYESPVRI…FVNELKQEGI (177 aa)). The region spanning 297 to 474 (TPAVVEKYFP…FLGGSCNVID (178 aa)) is the CRAL-TRIO domain. The region spanning 537 to 684 (HHGLYKAVDL…GFSSNSLQSR (148 aa)) is the GOLD domain.

The protein localises to the mitochondrion. This Anopheles gambiae (African malaria mosquito) protein is Protein real-time.